Consider the following 328-residue polypeptide: Reticulocalbin-3 (328 aa).

The first 20 residues, Met1–Gly20, serve as a signal peptide directing secretion. The segment at Pro24 to Ala48 is disordered. EF-hand domains follow at residues Gln77–Arg112, His113–Pro148, Lys163–Pro198, Met200–Gly235, Trp241–Asp276, and Gln277–Ser312. Ca(2+) is bound by residues Asp92, Asp94, Trp96, Glu101, Asp126, Asp128, Asp130, Arg132, and Glu137. The N-linked (GlcNAc...) asparagine glycan is linked to Asn140. Positions 176, 178, 180, 182, 187, 213, 215, 217, 219, 224, 254, 256, 258, 260, 265, 290, 292, 294, 296, and 301 each coordinate Ca(2+). The short motif at His325–Leu328 is the Prevents secretion from ER element.

It belongs to the CREC family. In terms of assembly, interacts with PCSK6 (immature form including the propeptide); probably involved in the maturation and the secretion of PCSK6. Degraded by PCSK6 and other endoproteases including FURIN and PCSK5. Post-translationally, N-glycosylated. As to expression, highly expressed in lung and heart. Also detected in liver, spleen, kidney, skeletal muscle, intestine, stomach, and brain.

It is found in the endoplasmic reticulum lumen. Its function is as follows. Probable molecular chaperone assisting protein biosynthesis and transport in the endoplasmic reticulum. Required for the proper biosynthesis and transport of pulmonary surfactant-associated protein A/SP-A, pulmonary surfactant-associated protein D/SP-D and the lipid transporter ABCA3. By regulating both the proper expression and the degradation through the endoplasmic reticulum-associated protein degradation pathway of these proteins plays a crucial role in pulmonary surfactant homeostasis. Has an anti-fibrotic activity by negatively regulating the secretion of type I and type III collagens. This calcium-binding protein also transiently associates with immature PCSK6 and regulates its secretion. This Mus musculus (Mouse) protein is Reticulocalbin-3.